Here is a 328-residue protein sequence, read N- to C-terminus: Malate dehydrogenase (328 aa).

12-18 is an NAD(+) binding site; the sequence is GAAGQIG. Positions 93 and 99 each coordinate substrate. Residues N106, Q113, and 130-132 each bind NAD(+); that span reads TGN. The substrate site is built by N132 and R163. The Proton acceptor role is filled by H188.

The protein belongs to the LDH/MDH superfamily. MDH type 2 family.

It catalyses the reaction (S)-malate + NAD(+) = oxaloacetate + NADH + H(+). In terms of biological role, catalyzes the reversible oxidation of malate to oxaloacetate. This is Malate dehydrogenase from Kocuria rhizophila (strain ATCC 9341 / DSM 348 / NBRC 103217 / DC2201).